The following is a 2326-amino-acid chain: MPGAIESSPSEWLQLELRRICANVLQLDTKDVDPQRSFLSLGGDSLLAIKILAQCRAQGITINIADIMAATTLESLYSMAQGPAELASSSTSDNASDKDSSLDDSETGALTPTTDAGSSLADTLSPEMKAKLSALSVSQDTAIQAVVPCSAIQDRMLVSQLQNPHLYSCCFVLRLTHSHPGLPVDAKRLGTAWGEVVKRHSSLRTVLVESTQRPGHYNQVILAGIIPAVEHYEGADHLGSVKFNVNNPIVFQPHSIPHRLQLVQVSPSEVYLKFDISHLLIDGQSAEVLLKDLSDAYRDGGLAAAPLSYADYVSSYLLEPAQLNTSRKESGMEMSPLTVPMDRPNEGLFDFQTVSANVPLDSRLVQSVCARYSVTLATVCQLAWGLVLRCYAGTDSVCFSYVNSGRSMSIPGVQEVIGPIVQTSMCSIQLGPADELPKILQRIHRDALQAMSQLSPLEANSTSKSARQLSNTTMSFQRALDDAAAQRAGLLVKIEGKANPTDYDISLGIAAGADGLSVDLDFWGSRLDEESARTMLGAFEAAIRGIIDSPDSTVSNISLLSPGEVSQLAQWNASIPKPERVCVHDKIMEISKLQPGAAAVNSWDGNLTYHDLTVQASTLAHHLRDQLGVGPERFVGICMDKSKWAIVSMLAVLMAGGIVVPLGVSHPRARIRELLNDTAAVALLVDGKHGDRLAGLEVENAAMLTVDQQLLDSLPTIPKPPVSGVTPDNAAWVIYTSGSTGVPKGVVLLHQNISTSVIAHGAVFGVNCVTRTAQFASYTFDVSLSDIVMTLFHGGCVCIFSEESRMNSLTEALQGLAVNYVNLTPTVLGLLNPADLPVIRTVVAGGEAMDPGIIEKWSPHARVFNSVGPSECTIIAVAAGPVTDPAQAANVGYPTGTRLWVALPTDPNQLCPVGVPGELLIEGPMLSRGYLNDPEKTAGAFITNPAFVKHLEAATPAWKVLFQKSERRFYRSGDLVRQKRDGSLVHMGRRDTQVKIRGQRVEIGEIEYWIMQRLKEVRRVAVLVIERGQGKEQKSLVAAVEFKEDYEDVRHSDDDISPVTKIGESTVLPQLLPLTEPLSKALHQLRNDLLEHLPPYMSPTMYAPVSQLPLNLSGKIDRRAVTQFINELDDVQLQQYLAVSGSHQEPSTETEFKLQKLWAKTLGVDVSQISADSHFFHIGGDSVAAMRVVAAARDVELVLRVADLFEYPRLPDLARAVESRVVDEADEEDPAPFSVWRESRGSEPSEEPVELDKIAAMCNLSKEQIEDVLPCTALQEGLIALTAQQPTAYIDRRVFALSQEVDLSQYRAAWQIVIHRTSALRTRIVSGPQTGSLQVVVVPRHIDWNKSSSLDEYLETDRQTGMMMGQPLNRFAFVDQPDGQRFFVWTTHHSTYDGWSRALVLQQVADAYASRDLPPIASFSRFIQYIHSQPQDAAASYWKAQLGGDTSADFPALPIANYRPRPQQRHQHTVNLASSSTKVMLPDLLRGAWALVVHQYVGKTDPVFAIALSGRNAPVRNVPNIAGPTLTTVPVRIFIDPEQLVNEFLQSVRQQAVDMIPYEHTGLQRIKKMVPELAAAVDLKHLFVVQPASDGESKFKIPGVTEHLVAVDEFDSYGLNVECMLSGQSIEVDVRFDEKMLSSSQVIRLMSQFEAVVHQLHLHGEGSLKIKDIDLLSPEDVNQLRQWNALPLAQPLDVCLHDLIAEVARSRPGAAAIEAWDGTLTHAQLQSYASTLAGYLIELGVGPEISVPVCMDKSVWAVVCFLAVLQAGGVVVPLGTGHPIPHIASIIEDTGAKLVLVDAQQFERLLELTPSRGLTLVPIDTQLLNSLPTAAPQTSVTPANAAWIVFTSGSTGKAKGVVLTHSNLSTAIKTHGARFGLGTHTRTIQFAAHTFDAVLQDYFTTLASGGTVCVPSEADRMNDLAGVMRGMNVNFANLTSTVARLLTPDQVPSLKVLILAGEQIQDSVVETWYKHAEVLNVYGPTECSINSTCNGPISDLSNAQSIGFGMGSRTWIADPTDPNRLCPVGTPGELLIEGPGLARGYLGDPAKTEAAIIQNPSFASRFALSDCRVYRTGDLAKQTEDGQILYLGRIDTQIKIRGQRVELGEIEHWIGRHLPHVKHTAVVAISRGEKQMRLAAVIERENGHKPDPVIFTQLKKTLSSLLPSYMVPSLYIPVTEIPLTVSGKLDRRAIKQTVESMPTEELEQYFAGESSGTRVPPSTEMEKALQRIWANSLGIEVDAIGADDNFFQLGGDSVVAMHISASSRQDQSVKGLAVGDIFMHPRLADLAVLLEKRPREGEGGWDEEMRDDESPFALLQEVLDLDLKDI.

The 77-residue stretch at 8–84 (SPSEWLQLEL…SLYSMAQGPA (77 aa)) folds into the Carrier 1 domain. Position 45 is an O-(pantetheine 4'-phosphoryl)serine (serine 45). Residues 87 to 121 (ASSSTSDNASDKDSSLDDSETGALTPTTDAGSSLA) are disordered. Over residues 108–121 (GALTPTTDAGSSLA) the composition is skewed to polar residues. Positions 144 to 568 (QAVVPCSAIQ…LLSPGEVSQL (425 aa)) are condensation 1. Residues 593-997 (LQPGAAAVNS…GRRDTQVKIR (405 aa)) form an adenylation 1 region. One can recognise a Carrier 2 domain in the interval 1145–1221 (EPSTETEFKL…DLARAVESRV (77 aa)). Serine 1182 is modified (O-(pantetheine 4'-phosphoryl)serine). Residues 1226–1247 (DEEDPAPFSVWRESRGSEPSEE) form a disordered region. Residues 1266-1680 (EDVLPCTALQ…LLSPEDVNQL (415 aa)) are condensation 2. Positions 1702 to 2097 (EVARSRPGAA…GRIDTQIKIR (396 aa)) are adenylation 2. The Carrier 3 domain occupies 2216-2294 (PPSTEMEKAL…DLAVLLEKRP (79 aa)). Serine 2253 carries the post-translational modification O-(pantetheine 4'-phosphoryl)serine.

It belongs to the NRP synthetase family.

Its pathway is secondary metabolite biosynthesis. Nonribosomal peptide synthetase; part of the inp gene cluster that mediates the biosynthesis of fellutamide B, a mycotoxin that acts as a proteasome inhibitor. In the first step of fellutabmide B biosynthesis inpC activates 3-hydroxydodecanoic acid to generate 3-hydroxydodecanoyl-AMP that is then loaded onto the T0 domain of inpB. The 3-hydroxydodecanoyl-S-phosphopantetheinyl-T0 is sequentially extended with L-Asn and L-Gln by the two CAT modules of inpB. The linear lipodipeptide from inpB is then transferred onto inpA for the addition of the third amino acid, L-Leu. Reductive releasing of the lipotripeptide by the TE domain of inpA produces (2S)-fellutamide B. InpF might be involved in the release and transfer of the lipodipeptide from inpB to inpA. The inp cluster-encoded proteasome subunit inpE confers resistance to internally produced fellutamides. The MFS efflux transporter inpD may contribute to fellutamide resistance as well. The sequence is that of Nonribosomal peptide synthetase inpB from Emericella nidulans (strain FGSC A4 / ATCC 38163 / CBS 112.46 / NRRL 194 / M139) (Aspergillus nidulans).